The primary structure comprises 288 residues: 4-hydroxy-tetrahydrodipicolinate synthase (288 aa).

Residue threonine 42 participates in pyruvate binding. Residue tyrosine 129 is the Proton donor/acceptor of the active site. The Schiff-base intermediate with substrate role is filled by lysine 158. Isoleucine 200 contacts pyruvate.

The protein belongs to the DapA family. As to quaternary structure, homotetramer; dimer of dimers.

It localises to the cytoplasm. The catalysed reaction is L-aspartate 4-semialdehyde + pyruvate = (2S,4S)-4-hydroxy-2,3,4,5-tetrahydrodipicolinate + H2O + H(+). It functions in the pathway amino-acid biosynthesis; L-lysine biosynthesis via DAP pathway; (S)-tetrahydrodipicolinate from L-aspartate: step 3/4. Its function is as follows. Catalyzes the condensation of (S)-aspartate-beta-semialdehyde [(S)-ASA] and pyruvate to 4-hydroxy-tetrahydrodipicolinate (HTPA). This chain is 4-hydroxy-tetrahydrodipicolinate synthase, found in Thermosipho melanesiensis (strain DSM 12029 / CIP 104789 / BI429).